Here is a 614-residue protein sequence, read N- to C-terminus: DNA ligase (614 aa).

NAD(+) is bound by residues 29 to 33 and 73 to 74; these read DQDYD and SI. Lys111 acts as the N6-AMP-lysine intermediate in catalysis. The NAD(+) site is built by Arg127, Glu158, and Lys270. The Zn(2+) site is built by Cys358, Cys361, Cys374, and Cys380. Residues 538 to 614 enclose the BRCT domain; that stretch reads TLTHELFDKK…MTETDYLSKI (77 aa).

The protein belongs to the NAD-dependent DNA ligase family. LigA subfamily. The cofactor is Mg(2+). Requires Mn(2+) as cofactor.

It carries out the reaction NAD(+) + (deoxyribonucleotide)n-3'-hydroxyl + 5'-phospho-(deoxyribonucleotide)m = (deoxyribonucleotide)n+m + AMP + beta-nicotinamide D-nucleotide.. Its function is as follows. DNA ligase that catalyzes the formation of phosphodiester linkages between 5'-phosphoryl and 3'-hydroxyl groups in double-stranded DNA using NAD as a coenzyme and as the energy source for the reaction. It is essential for DNA replication and repair of damaged DNA. This chain is DNA ligase, found in Ruthia magnifica subsp. Calyptogena magnifica.